We begin with the raw amino-acid sequence, 199 residues long: Phosphoserine phosphatase RsbX (199 aa).

A PPM-type phosphatase domain is found at Gln-11–Leu-198.

The catalysed reaction is O-phospho-L-serine + H2O = L-serine + phosphate. It catalyses the reaction O-phospho-D-serine + H2O = D-serine + phosphate. Its function is as follows. Negative regulator of sigma-B activity. Dephosphorylates RsbS. Plays a role both in maintaining low sigma-B activity during growth and in reestablishing prestress sigma-B activity after induction. Could have a negative feedback role by indirectly communicating sigma-B protein levels. The protein is Phosphoserine phosphatase RsbX (rsbX) of Bacillus subtilis (strain 168).